Reading from the N-terminus, the 356-residue chain is Histidinol-phosphate aminotransferase (356 aa).

K210 is modified (N6-(pyridoxal phosphate)lysine).

The protein belongs to the class-II pyridoxal-phosphate-dependent aminotransferase family. Histidinol-phosphate aminotransferase subfamily. As to quaternary structure, homodimer. Pyridoxal 5'-phosphate is required as a cofactor.

It carries out the reaction L-histidinol phosphate + 2-oxoglutarate = 3-(imidazol-4-yl)-2-oxopropyl phosphate + L-glutamate. It functions in the pathway amino-acid biosynthesis; L-histidine biosynthesis; L-histidine from 5-phospho-alpha-D-ribose 1-diphosphate: step 7/9. The chain is Histidinol-phosphate aminotransferase (hisC) from Acetobacter pasteurianus (Acetobacter turbidans).